The chain runs to 69 residues: Antimicrobial peptide Meucin-18 (69 aa).

The signal sequence occupies residues 1-16; that stretch reads MVIFLAYFLVVNESEA. The propeptide occupies 38–69; it reads ERSVMNRDLENLFDPYQRNLEMDRLLKQLRNY.

Belongs to the non-disulfide-bridged peptide (NDBP) superfamily. Medium-length antimicrobial peptide (group 3) family. In terms of tissue distribution, expressed by the venom gland.

It is found in the secreted. The protein localises to the target cell membrane. Its function is as follows. Amphipathic peptide that exhibits extensive cytolytic activities against both prokaryotic and eukaryotic cells. Acts by fastly disrupting the bacterial membrane. Is more potent against Gram-positive bacteria than against Gram-negative bacteria, and fungi (LC=25.1-8.3 uM). Shows potent activity against penicillin (MIC=3.0 uM) and methicillin (MIC=1.5-3.0 uM) resistant bacteria. Is lethal to the fungus Beauveria sp (LC=1.9 uM), a highly lethal pathogenic fungus to insects and resistant to many AMPs. Shows hemolytic activity against rabbit erythrocytes (37.7% of inhibition at 6.25 uM) and cytolysis against rat dorsal root ganglions. May act by disrupting the integrity of the bacterial cell membrane. Antibiotic activity is not affected by major negatively charged components of the prokaryotic cell wall (e.g. lipopolysaccharides and lipoteichoic acid). In vivo, intravenous injection into mice tail provokes uncomfortable symptoms with a death rate of 12.5%. In vivo, in a mouse model of lethal peritonitis, shows potent antibiotic activity without cytotoxicity, improving the survival rate. The polypeptide is Antimicrobial peptide Meucin-18 (Mesobuthus eupeus (Lesser Asian scorpion)).